Consider the following 464-residue polypeptide: Glutamate--tRNA ligase (464 aa).

Positions P10–G20 match the 'HIGH' region motif. Positions 99, 101, 126, and 128 each coordinate Zn(2+). A 'KMSKS' region motif is present at residues K236–R240. K239 is an ATP binding site.

This sequence belongs to the class-I aminoacyl-tRNA synthetase family. Glutamate--tRNA ligase type 1 subfamily. Monomer. The cofactor is Zn(2+).

The protein localises to the cytoplasm. The enzyme catalyses tRNA(Glu) + L-glutamate + ATP = L-glutamyl-tRNA(Glu) + AMP + diphosphate. In terms of biological role, catalyzes the attachment of glutamate to tRNA(Glu) in a two-step reaction: glutamate is first activated by ATP to form Glu-AMP and then transferred to the acceptor end of tRNA(Glu). The sequence is that of Glutamate--tRNA ligase from Oleidesulfovibrio alaskensis (strain ATCC BAA-1058 / DSM 17464 / G20) (Desulfovibrio alaskensis).